A 455-amino-acid chain; its full sequence is Serine incorporator 2 (455 aa).

Helical transmembrane passes span 5–27 (LGAC…ILCS), 40–57 (LIFT…IIML), 96–118 (AVYR…MLCV), 131–150 (GFWF…AFYI), 160–182 (FYFG…IDFA), 202–224 (YAGL…ALMF), 239–256 (FISL…AAVL), 268–290 (LLQA…SSIP), 317–339 (QWWD…FISL), 385–407 (TYSY…MTLT), and 422–444 (WTAV…WTLV).

The protein belongs to the TDE1 family.

Its subcellular location is the cell membrane. The catalysed reaction is a 1,2-diacyl-sn-glycero-3-phospho-L-serine(in) = a 1,2-diacyl-sn-glycero-3-phospho-L-serine(out). The enzyme catalyses a 1,2-diacyl-sn-glycero-3-phosphocholine(in) = a 1,2-diacyl-sn-glycero-3-phosphocholine(out). It carries out the reaction a 1,2-diacyl-sn-glycero-3-phosphoethanolamine(in) = a 1,2-diacyl-sn-glycero-3-phosphoethanolamine(out). Non-ATP-dependent, non-specific lipid transporter for phosphatidylserine, phosphatidylcholine, and phosphatidylethanolamine. Functions as a scramblase that flips lipids in both directions across the membrane. In contrast to SERINC3 and SERINC5, has no effect on HIV-1 particles infectivity. The chain is Serine incorporator 2 from Homo sapiens (Human).